The chain runs to 334 residues: MPRPSSPRPDAERKSASPLHPRNRHLGRYDFPGLIAGNPELERFVIVNPYGKPSIDFADPLAVKAFNRALLQQFYDVREWNIPEGYLCPPIPGRADYLHYLADLLGASHDGVIPRGTGLRALDVGTGANCIYPLLGHHEYGWRFVGADIDPQSLASAAAILAANPRFAAAIELRRQPDRRHIFEGLVDSAERFDMTLCNPPFHASLDEATRGSRRKWKNLGKLDPGRTLPLLNFGGQGAELHCEGGEAAFLASMAGESRAFATQVFWFTTLVSKASNLPNLQERLKTLGASDIRVVDMAQGQKQSRFVAWTYLDKKQRRAWRRERWSAAVPLGE.

Positions 1–25 (MPRPSSPRPDAERKSASPLHPRNRH) are disordered.

It belongs to the methyltransferase superfamily. METTL16/RlmF family.

The protein resides in the cytoplasm. The catalysed reaction is adenosine(1618) in 23S rRNA + S-adenosyl-L-methionine = N(6)-methyladenosine(1618) in 23S rRNA + S-adenosyl-L-homocysteine + H(+). Specifically methylates the adenine in position 1618 of 23S rRNA. The polypeptide is Ribosomal RNA large subunit methyltransferase F (Pseudomonas paraeruginosa (strain DSM 24068 / PA7) (Pseudomonas aeruginosa (strain PA7))).